Here is a 475-residue protein sequence, read N- to C-terminus: Actin-related protein 10 (475 aa).

It belongs to the actin family.

It localises to the cytoplasm. The protein resides in the cytoskeleton. This is Actin-related protein 10 from Dictyostelium discoideum (Social amoeba).